The chain runs to 263 residues: Hydroxyethylthiazole kinase 1 (263 aa).

Substrate is bound at residue M42. 2 residues coordinate ATP: K118 and T164. A substrate-binding site is contributed by G191.

It belongs to the Thz kinase family. Mg(2+) serves as cofactor.

It catalyses the reaction 5-(2-hydroxyethyl)-4-methylthiazole + ATP = 4-methyl-5-(2-phosphooxyethyl)-thiazole + ADP + H(+). It functions in the pathway cofactor biosynthesis; thiamine diphosphate biosynthesis; 4-methyl-5-(2-phosphoethyl)-thiazole from 5-(2-hydroxyethyl)-4-methylthiazole: step 1/1. In terms of biological role, catalyzes the phosphorylation of the hydroxyl group of 4-methyl-5-beta-hydroxyethylthiazole (THZ). The protein is Hydroxyethylthiazole kinase 1 of Clostridium botulinum (strain Kyoto / Type A2).